We begin with the raw amino-acid sequence, 100 residues long: Cell division topological specificity factor (100 aa).

Belongs to the MinE family.

In terms of biological role, prevents the cell division inhibition by proteins MinC and MinD at internal division sites while permitting inhibition at polar sites. This ensures cell division at the proper site by restricting the formation of a division septum at the midpoint of the long axis of the cell. This Blochmanniella floridana protein is Cell division topological specificity factor.